The following is a 434-amino-acid chain: UPF0597 protein CLB_1949 (434 aa).

It belongs to the UPF0597 family.

The chain is UPF0597 protein CLB_1949 from Clostridium botulinum (strain ATCC 19397 / Type A).